The following is a 398-amino-acid chain: 8-amino-7-oxononanoate synthase (398 aa).

Substrate-binding residues include R22 and R29. 109-110 (GW) is a pyridoxal 5'-phosphate binding site. Substrate is bound at residue H141. Pyridoxal 5'-phosphate-binding positions include S189, 214–217 (DEAH), and 242–245 (TFSK). At K245 the chain carries N6-(pyridoxal phosphate)lysine. T359 is a substrate binding site.

It belongs to the class-II pyridoxal-phosphate-dependent aminotransferase family. BioF subfamily. As to quaternary structure, homodimer. Pyridoxal 5'-phosphate is required as a cofactor.

It catalyses the reaction 6-carboxyhexanoyl-[ACP] + L-alanine + H(+) = (8S)-8-amino-7-oxononanoate + holo-[ACP] + CO2. Its pathway is cofactor biosynthesis; biotin biosynthesis. In terms of biological role, catalyzes the decarboxylative condensation of pimeloyl-[acyl-carrier protein] and L-alanine to produce 8-amino-7-oxononanoate (AON), [acyl-carrier protein], and carbon dioxide. The protein is 8-amino-7-oxononanoate synthase of Gluconacetobacter diazotrophicus (strain ATCC 49037 / DSM 5601 / CCUG 37298 / CIP 103539 / LMG 7603 / PAl5).